A 114-amino-acid polypeptide reads, in one-letter code: MMDFLSKTPEPPYYAVIFSSVKSENDTGYGETAERMVSLAADQPGFLGVESVREADGRGITVSYWDSMDAINHWRHHTEHQAAKEKGRSVWYESYAVRVAKVDRQRLFQENTND.

One can recognise an ABM domain in the interval 13 to 99 (YYAVIFSSVK…VWYESYAVRV (87 aa)).

This is an uncharacterized protein from Bacillus subtilis (strain 168).